Consider the following 628-residue polypeptide: UvrABC system protein C (628 aa).

Residues 20 to 99 (TSAGVYLMRD…IKTHKPRYNV (80 aa)) form the GIY-YIG domain. Positions 209–244 (AELLAQLEDQMQTAAAAMNFEHAARLRDRITGLNQL) constitute a UVR domain.

It belongs to the UvrC family. In terms of assembly, interacts with UvrB in an incision complex.

It localises to the cytoplasm. In terms of biological role, the UvrABC repair system catalyzes the recognition and processing of DNA lesions. UvrC both incises the 5' and 3' sides of the lesion. The N-terminal half is responsible for the 3' incision and the C-terminal half is responsible for the 5' incision. This chain is UvrABC system protein C, found in Gloeobacter violaceus (strain ATCC 29082 / PCC 7421).